The following is a 189-amino-acid chain: Pyridoxal 5'-phosphate synthase subunit PdxT (189 aa).

47–49 contacts L-glutamine; that stretch reads GES. Catalysis depends on cysteine 79, which acts as the Nucleophile. L-glutamine is bound by residues arginine 106 and 135–136; that span reads IR. Catalysis depends on charge relay system residues histidine 171 and glutamate 173.

This sequence belongs to the glutaminase PdxT/SNO family. As to quaternary structure, in the presence of PdxS, forms a dodecamer of heterodimers. Only shows activity in the heterodimer.

It carries out the reaction aldehydo-D-ribose 5-phosphate + D-glyceraldehyde 3-phosphate + L-glutamine = pyridoxal 5'-phosphate + L-glutamate + phosphate + 3 H2O + H(+). The enzyme catalyses L-glutamine + H2O = L-glutamate + NH4(+). It functions in the pathway cofactor biosynthesis; pyridoxal 5'-phosphate biosynthesis. In terms of biological role, catalyzes the hydrolysis of glutamine to glutamate and ammonia as part of the biosynthesis of pyridoxal 5'-phosphate. The resulting ammonia molecule is channeled to the active site of PdxS. The sequence is that of Pyridoxal 5'-phosphate synthase subunit PdxT from Desulforudis audaxviator (strain MP104C).